A 288-amino-acid chain; its full sequence is HTH-type transcriptional repressor CarA (288 aa).

The HTH merR-type domain maps to 2–73 (TLRIRTIARM…VSEAIAQVKT (72 aa)). The segment at residues 5–24 (IRTIARMTGIREATLRAWER) is a DNA-binding region (H-T-H motif). A B12-binding domain is found at 162-288 (GPRALLACPS…NQVRNAQNRP (127 aa)).

It belongs to the CarA/CarH B12-binding photoregulator family. In terms of assembly, forms homodimers or oligomers. Interacts with CarS.

Binds cobalamin (vitamin B12), but cobalamin is not required for CarA activity. Interaction with CarS prevents binding to DNA. Functionally, negative regulator of the carB operon in the dark. Binds specifically to the CarA operator, in the region around the carB promoter, which blocks access to the RNA polymerase. The sequence is that of HTH-type transcriptional repressor CarA (carA) from Myxococcus xanthus.